The sequence spans 216 residues: ATP-dependent dethiobiotin synthetase BioD (216 aa).

Residue 13 to 18 (EVGKTY) participates in ATP binding. Thr17 contributes to the Mg(2+) binding site. Lys38 is an active-site residue. Thr42 is a substrate binding site. ATP is bound by residues Asp47 and 112-115 (EGVG). Mg(2+) contacts are provided by Asp47 and Glu112.

The protein belongs to the dethiobiotin synthetase family. As to quaternary structure, homodimer. The cofactor is Mg(2+).

It localises to the cytoplasm. The enzyme catalyses (7R,8S)-7,8-diammoniononanoate + CO2 + ATP = (4R,5S)-dethiobiotin + ADP + phosphate + 3 H(+). It functions in the pathway cofactor biosynthesis; biotin biosynthesis; biotin from 7,8-diaminononanoate: step 1/2. In terms of biological role, catalyzes a mechanistically unusual reaction, the ATP-dependent insertion of CO2 between the N7 and N8 nitrogen atoms of 7,8-diaminopelargonic acid (DAPA, also called 7,8-diammoniononanoate) to form a ureido ring. The sequence is that of ATP-dependent dethiobiotin synthetase BioD from Endomicrobium trichonymphae.